The sequence spans 393 residues: Staphopain B (393 aa).

The first 36 residues, 1–36 (MNSSCKSRVFNIISIIMVSMLILSLGAFANNNKAKA), serve as a signal peptide directing secretion. Residues 37 to 219 (DSHSKQLEIN…KVEENEAIQE (183 aa)) constitute a propeptide that is removed on maturation. Active-site residues include cysteine 243, histidine 340, and asparagine 360.

This sequence belongs to the peptidase C47 family. In terms of assembly, in the cytoplasm, prematurely activated/folded SspB forms a stable non-covalent complex with SspC. Proteolytically cleaved by staphylococcal serine protease (SspA).

The protein resides in the secreted. Prematurely activated/folded staphopain B is inhibited by staphostatin B (SspC), which is probably required to protect staphylococcal cytoplasmic proteins from degradation by SspB. Also inactivated by E-64 and stimulated by EDTA. Functionally, cysteine protease that plays an important role in the inhibition of host innate immune response. Degrades host elastin, fibrogen, fibronectin and kininogen. Blocks phagocytosis of opsonised S.aureus by neutrophils and monocytes by inducing their death in a proteolytic activity-dependent manner. Decreases surface expression of the 'don't eat me' signal CD31 on neutrophils. Cleaves host galectin-3/LGALS3, thereby inhibiting the neutrophil-activating ability of the lectin. The protein is Staphopain B (sspB) of Staphylococcus aureus (strain NCTC 8325 / PS 47).